Reading from the N-terminus, the 131-residue chain is Profilin-5 (131 aa).

A disulfide bridge connects residues Cys13 and Cys115. Residues 81-97 carry the Involved in PIP2 interaction motif; that stretch reads AVIRGKKGAGGITIKKT. Thr111 is subject to Phosphothreonine.

Belongs to the profilin family. Occurs in many kinds of cells as a complex with monomeric actin in a 1:1 ratio. Phosphorylated by MAP kinases.

Its subcellular location is the cytoplasm. The protein resides in the cytoskeleton. Functionally, binds to actin and affects the structure of the cytoskeleton. At high concentrations, profilin prevents the polymerization of actin, whereas it enhances it at low concentrations. This chain is Profilin-5, found in Phleum pratense (Common timothy).